Here is a 128-residue protein sequence, read N- to C-terminus: Cytochrome c-type biogenesis protein CcmE (128 aa).

Residues 1-8 (MQKRVRNR) are Cytoplasmic-facing. A helical; Signal-anchor for type II membrane protein transmembrane segment spans residues 9-29 (LITIIICFCSACLGISIILYN). At 30–128 (LEKNIVFFLP…KHDENYRPPQ (99 aa)) the chain is on the periplasmic side. Residues His-120 and Tyr-124 each coordinate heme.

It belongs to the CcmE/CycJ family.

The protein resides in the cell inner membrane. In terms of biological role, heme chaperone required for the biogenesis of c-type cytochromes. Transiently binds heme delivered by CcmC and transfers the heme to apo-cytochromes in a process facilitated by CcmF and CcmH. The polypeptide is Cytochrome c-type biogenesis protein CcmE (Rickettsia conorii (strain ATCC VR-613 / Malish 7)).